A 360-amino-acid polypeptide reads, in one-letter code: Aspartate beta-hydroxylase domain-containing protein 1 (360 aa).

The Cytoplasmic portion of the chain corresponds to 1–45 (MWKGGNQEAVIEGSGGELGVPGSWGLQDAACHLARASLPIMFPWP). Residues 46-68 (LPLGSSALTMLLGALTSLFLWYC) traverse the membrane as a helical segment. Residues 69–360 (YRLGSQDMQA…ALDFVFAPDP (292 aa)) lie on the Lumenal side of the membrane.

The protein belongs to the aspartyl/asparaginyl beta-hydroxylase family.

The protein resides in the membrane. In Mus musculus (Mouse), this protein is Aspartate beta-hydroxylase domain-containing protein 1 (Asphd1).